Here is a 235-residue protein sequence, read N- to C-terminus: Motile sperm domain-containing protein 3 (235 aa).

Disordered regions lie at residues 1–25 and 143–171; these read MRRG…RGAP and ELQG…FQEH. In terms of domain architecture, MSP spans 33–145; the sequence is PVLVFPPDLV…RAPAYPLELQ (113 aa). Over residues 149-164 the composition is skewed to pro residues; sequence DPAPRPGPPAGTPPPT. 2 helical membrane passes run 180–200 and 213–233; these read SFLL…LPLP and VSLG…MVFL.

The protein localises to the membrane. This is Motile sperm domain-containing protein 3 (MOSPD3) from Homo sapiens (Human).